The following is a 622-amino-acid chain: Low affinity potassium transport system protein Kup (622 aa).

12 helical membrane passes run 9–29, 49–69, 103–123, 137–157, 165–185, 213–233, 247–267, 276–296, 337–357, 363–383, 396–416, and 419–439; these read LPAI…TSPL, VFGF…IKYL, VIMG…TPAI, PQLD…LFMI, VGQL…GLGL, VSFI…ALYA, WFTV…ALLL, PFFL…AALA, IYIP…IVSF, LAAA…ILST, FVAL…TANL, and LLSG…VMTT.

This sequence belongs to the HAK/KUP transporter (TC 2.A.72) family.

It localises to the cell inner membrane. The enzyme catalyses K(+)(in) + H(+)(in) = K(+)(out) + H(+)(out). Its function is as follows. Responsible for the low-affinity transport of potassium into the cell. Likely operates as a K(+):H(+) symporter. In Escherichia coli O6:K15:H31 (strain 536 / UPEC), this protein is Low affinity potassium transport system protein Kup.